The primary structure comprises 161 residues: Phosphopantetheine adenylyltransferase (161 aa).

Position 11 (Thr-11) interacts with substrate. ATP contacts are provided by residues 11–12 and His-19; that span reads TF. The substrate site is built by Lys-43, Thr-75, and Arg-89. Residues 90–92, Glu-100, and 125–131 contribute to the ATP site; these read GLR and YSFLSSS.

This sequence belongs to the bacterial CoaD family. Homohexamer. It depends on Mg(2+) as a cofactor.

It is found in the cytoplasm. It catalyses the reaction (R)-4'-phosphopantetheine + ATP + H(+) = 3'-dephospho-CoA + diphosphate. It functions in the pathway cofactor biosynthesis; coenzyme A biosynthesis; CoA from (R)-pantothenate: step 4/5. Its function is as follows. Reversibly transfers an adenylyl group from ATP to 4'-phosphopantetheine, yielding dephospho-CoA (dPCoA) and pyrophosphate. This Listeria innocua serovar 6a (strain ATCC BAA-680 / CLIP 11262) protein is Phosphopantetheine adenylyltransferase.